A 406-amino-acid polypeptide reads, in one-letter code: Fosmidomycin resistance protein (406 aa).

Topologically, residues 1–42 are periplasmic; it reads MAMSEQPQPVAGAAASTTKARTSFGILGAISLSHLLNDMIQS. The next 2 membrane-spanning stretches (helical) occupy residues 43-63 and 64-84; these read LILA…MQIG and MITL…GYWT. Topologically, residues 85 to 102 are periplasmic; sequence DKYPMPWSLPIGMCFTLS. Residues 103-123 form a helical membrane-spanning segment; the sequence is GLVLLALAGSFGAVLLAAALV. Over 124–151 the chain is Cytoplasmic; that stretch reads GTGSSVFHPESSRVARMASGGRHGLAQS. The helical transmembrane segment at 152-172 threads the bilayer; it reads IFQVGGNFGSSLGPLLAAVII. Residues 173–177 lie on the Periplasmic side of the membrane; that stretch reads APYGK. The chain crosses the membrane as a helical span at residues 178-198; that stretch reads GNVAWFVLAALLAIVVLAQIS. The Cytoplasmic portion of the chain corresponds to 199–225; sequence RWYSAQHRMNKGKPKATIINPLPRNKV. A helical transmembrane segment spans residues 226–246; the sequence is VLAVSILLILIFSKYFYMASI. At 247 to 266 the chain is on the periplasmic side; it reads SSYYTFYLMQKFGLSIQNAQ. Residues 267–287 form a helical membrane-spanning segment; sequence LHLFAFLFAVAAGTVIGGPVG. The Cytoplasmic portion of the chain corresponds to 288–294; sequence DKIGRKY. Residues 295 to 315 traverse the membrane as a helical segment; the sequence is VIWGSILGVAPFTLILPYASL. Topologically, residues 316–319 are periplasmic; it reads HWTG. A helical transmembrane segment spans residues 320-340; sequence VLTVIIGFILASAFSAILVYA. Over 341 to 353 the chain is Cytoplasmic; sequence QELLPGRIGMVSG. Residues 354 to 374 traverse the membrane as a helical segment; the sequence is LFFGFAFGMGGLGAAVLGLIA. Residues 375–378 are Periplasmic-facing; the sequence is DHTS. The chain crosses the membrane as a helical span at residues 379–399; it reads IELVYKICAFLPLLGMLTIFL. At 400-406 the chain is on the cytoplasmic side; the sequence is PDNRHKD.

Belongs to the major facilitator superfamily.

It localises to the cell inner membrane. Confers the resistance against fosmidomycin. This is Fosmidomycin resistance protein (fsr) from Escherichia coli (strain K12).